A 365-amino-acid polypeptide reads, in one-letter code: Aminotransferase poxL (365 aa).

Arginine 92 is a binding site for pyridoxal 5'-phosphate. At lysine 193 the chain carries N6-(pyridoxal phosphate)lysine. Glutamate 229 contributes to the pyridoxal 5'-phosphate binding site.

This sequence belongs to the class-IV pyridoxal-phosphate-dependent aminotransferase family. The cofactor is pyridoxal 5'-phosphate.

The protein operates within secondary metabolite biosynthesis. In terms of biological role, aminotransferase; part of the gene cluster that mediates the biosynthesis of oxaleimides, cytotoxic compounds containing an unusual disubstituted succinimide moiety. The first step of the pathway is provided by the HR-PKS poxF that serves in a new mode of collaborative biosynthesis with the PKS-NRPS poxE, by providing the olefin containing amino acid substrate via the synthesis of an ACP-bound dec-4-enoate. The cytochrome P450 monooxygenase poxM-catalyzed oxidation at the alpha-position creates the enzyme-bound 2-hydroxydec-4-enoyl-ACP thioester, which may be prone to spontaneous hydrolysis to yield 2-hydroxydec-4-enoic acid due to increased electrophilicity of the carbonyl. 2-hydroxydec-4-enoic acid can then be further oxidized by poxM to yield the alpha-ketoacid 2-oxodec-4-enoicacid, which is reductively aminated by the aminotransferase poxL to yield (S,E)-2-aminodec-4-enoic acid. The Hybrid PKS-NRPS synthetase poxE then performs condensation between the octaketide product of its PKS modules and the amino group of (S,E)-2-aminodec-4-enoic acid which is activated and incorporated by the adenylation domain. The resulting aminoacyl product can be cyclized by the Diels-Alderase PoxQ and reductively released by the reductive (R) domain of poxE to yield an aldehyde intermediate. The released aldehyde is then substrate for a Knoevenagel condensation by the hydrolyase poxO followed by an oxidation at the 5-position of the pyrrolidone ring. The presence of the olefin from the amino acid building block allows for migration of the substituted allyl group to occur. This allylic transposition reaction takes place in a conjugate addition, semipinacol-like fashion to yield a succinimide intermediate. Iterative two-electron oxidations of the C7 methyl of the succinimide intermediate to the carboxylic acid can be catalyzed by one of two remaining cytochrome P450 monooxygenasess poxC or poxD to yield oxaleimide A. Subsequent oxidation yields the maleimide scaffold oxaleimide I. Both oxaleimide A and oxaleimide I can undergo oxidative modifications in the decalin ring to yield the series of products oxaleimides B to H. The sequence is that of Aminotransferase poxL from Penicillium oxalicum.